Here is a 350-residue protein sequence, read N- to C-terminus: uncharacterized protein (350 aa).

Over residues 197 to 212 (KNDNSEDNRSEDDLKS) the composition is skewed to basic and acidic residues. The segment at 197 to 217 (KNDNSEDNRSEDDLKSSQDPV) is disordered.

Its subcellular location is the plastid. The protein localises to the chloroplast. This is an uncharacterized protein from Euglena gracilis.